The primary structure comprises 328 residues: DNA-directed RNA polymerase subunit alpha (328 aa).

The segment at 1-231 is alpha N-terminal domain (alpha-NTD); sequence MIYQMQMPAK…EHVTFFANFS (231 aa). Residues 247-328 form an alpha C-terminal domain (alpha-CTD) region; sequence DEFETMRRLL…MDITRYQMKG (82 aa).

It belongs to the RNA polymerase alpha chain family. In terms of assembly, homodimer. The RNAP catalytic core consists of 2 alpha, 1 beta, 1 beta' and 1 omega subunit. When a sigma factor is associated with the core the holoenzyme is formed, which can initiate transcription.

It carries out the reaction RNA(n) + a ribonucleoside 5'-triphosphate = RNA(n+1) + diphosphate. Its function is as follows. DNA-dependent RNA polymerase catalyzes the transcription of DNA into RNA using the four ribonucleoside triphosphates as substrates. The chain is DNA-directed RNA polymerase subunit alpha from Chlorobium luteolum (strain DSM 273 / BCRC 81028 / 2530) (Pelodictyon luteolum).